The chain runs to 407 residues: Na(+)-translocating NADH-quinone reductase subunit F (407 aa).

Residues 3–23 (ITLGIAMFTVIVLALAVLILF) traverse the membrane as a helical segment. Residues 32-126 (GDITIEINDD…SMKIELPEEV (95 aa)) enclose the 2Fe-2S ferredoxin-type domain. [2Fe-2S] cluster-binding residues include C69, C75, C78, and C110. Positions 129 to 269 (VKKWECTVIS…SGPFGEFFAK (141 aa)) constitute an FAD-binding FR-type domain.

The protein belongs to the NqrF family. As to quaternary structure, composed of six subunits; NqrA, NqrB, NqrC, NqrD, NqrE and NqrF. [2Fe-2S] cluster is required as a cofactor. FAD serves as cofactor.

Its subcellular location is the cell inner membrane. The catalysed reaction is a ubiquinone + n Na(+)(in) + NADH + H(+) = a ubiquinol + n Na(+)(out) + NAD(+). Its function is as follows. NQR complex catalyzes the reduction of ubiquinone-1 to ubiquinol by two successive reactions, coupled with the transport of Na(+) ions from the cytoplasm to the periplasm. The first step is catalyzed by NqrF, which accepts electrons from NADH and reduces ubiquinone-1 to ubisemiquinone by a one-electron transfer pathway. The polypeptide is Na(+)-translocating NADH-quinone reductase subunit F (Histophilus somni (strain 129Pt) (Haemophilus somnus)).